The following is an 898-amino-acid chain: MSDDKKDEEKLKKSDENFDDDSKYYEFDDTIKKVFEEEKAKEEDEDEEEIPQEKEGYQVKSQLLETEQNGLQPADLAKVMKSSFIEYAMSVIVSRALPDARDGLKPVHRRILYGMSELGMFHTAPHKKSARIVGDVLGKYHPHGDSSVYEAMVRMAQDFSLRYPLIDGHGNFGSIDGDEAAAMRYTEARMSKIAGVMVDGIKKNTVDFIDNYDGTEKEPTVLPSRFPNLLVSGTSGIAVGMATNIPPHNLGEIIDAVCALAKNPEITIDGLMEFVLAPDFPTGATIFNKAGLIEAYKTGRGSITMRAKANIQELANGKSKIIITEIPYEVKKTEIMEKIADHLKNKRIEGISDFRDESNRDGIRVVIDVKKNAVPEVILNTLYKLTRLQTNFSFNMIALVNGEPKLLNLKECLQVYLDHQIDVTRRRLQFDLEKDLARAHILEGLKICVENIDRVIEIIKKSKTDVDAQAKLCQTFSLSEIQAKAIVDMRLGRLTGLAIEKMNDELDQVNARIAEYRAILSSHEKLIELIIKELQEVKEAYGDKRRSEIRWDVMSSINNEDLIPQKEIVITLSSNNYIKRIDLEEYREQRRGGVGVSTVKTYQDDDIQDVVVANTHADLLIFTDEAKIYRVRGHEIPSGTKQSKGTPIVNIVPTIQKNEKVVKIICVTDYEESQSLITVTERGVIKKTNLKEYELIRKNGKYALSLLEDDHLIDVRVVDQDEEIFIAASNSRINRFNVADVREMGRVARGVGGIRLSDDDKVVSVSSSKDGAYIFSLGAKGYGKLSLVESYRKTKRNAKGVITLNEDKAGKLVYAAAVHGVEDLIIMTQSGIAIRISLRDINVIGRNAKGVKIINLKGRSDQIVGVAKIYDEDATDRELTKEEYIEVTKEIDIDLANE.

Disordered regions lie at residues 1-22 and 36-56; these read MSDD…DDDS and EEEK…EKEG. Residues 97 to 562 enclose the Topo IIA-type catalytic domain; it reads LPDARDGLKP…VMSSINNEDL (466 aa). Residue Tyr-185 is the O-(5'-phospho-DNA)-tyrosine intermediate of the active site. The GyrA-box signature appears at 589-595; that stretch reads QRRGGVG.

This sequence belongs to the type II topoisomerase GyrA/ParC subunit family. In terms of assembly, heterotetramer, composed of two GyrA and two GyrB chains. In the heterotetramer, GyrA contains the active site tyrosine that forms a transient covalent intermediate with DNA, while GyrB binds cofactors and catalyzes ATP hydrolysis.

The protein localises to the cytoplasm. It catalyses the reaction ATP-dependent breakage, passage and rejoining of double-stranded DNA.. In terms of biological role, a type II topoisomerase that negatively supercoils closed circular double-stranded (ds) DNA in an ATP-dependent manner to modulate DNA topology and maintain chromosomes in an underwound state. Negative supercoiling favors strand separation, and DNA replication, transcription, recombination and repair, all of which involve strand separation. Also able to catalyze the interconversion of other topological isomers of dsDNA rings, including catenanes and knotted rings. Type II topoisomerases break and join 2 DNA strands simultaneously in an ATP-dependent manner. The chain is DNA gyrase subunit A from Metamycoplasma arthritidis (strain 158L3-1) (Mycoplasma arthritidis).